The following is a 634-amino-acid chain: Pescadillo homolog (634 aa).

The BRCT domain occupies Arg-321–Met-414. 3 disordered regions span residues Glu-437 to Glu-473, Glu-491 to Glu-561, and Asn-603 to Ala-634. The residue at position 453 (Ser-453) is a Phosphoserine. 2 stretches are compositionally biased toward acidic residues: residues Asp-454–Glu-473 and Val-501–Gln-527. 2 coiled-coil regions span residues Ser-460 to Ser-546 and Leu-596 to Lys-629. Composition is skewed to basic and acidic residues over residues Leu-528–Lys-548 and Asn-603–Ala-623. Residues Ala-624–Ala-634 show a composition bias toward low complexity.

Belongs to the pescadillo family.

The protein resides in the nucleus. The protein localises to the nucleolus. It is found in the nucleoplasm. Required for maturation of ribosomal RNAs and formation of the large ribosomal subunit. This Drosophila willistoni (Fruit fly) protein is Pescadillo homolog.